The primary structure comprises 355 residues: NADH-quinone oxidoreductase subunit H (355 aa).

Helical transmembrane passes span 25 to 45 (VVRI…LILW), 91 to 111 (WLYL…WAVI), 126 to 146 (LLYA…AGWA), 170 to 190 (MGFA…SEIV), 205 to 225 (FLSW…ISGI), 253 to 273 (MAFA…SALA), 290 to 310 (FIPG…VFIW), and 330 to 350 (VFLP…MSPL).

It belongs to the complex I subunit 1 family. As to quaternary structure, NDH-1 is composed of 14 different subunits. Subunits NuoA, H, J, K, L, M, N constitute the membrane sector of the complex.

The protein localises to the cell inner membrane. It catalyses the reaction a quinone + NADH + 5 H(+)(in) = a quinol + NAD(+) + 4 H(+)(out). In terms of biological role, NDH-1 shuttles electrons from NADH, via FMN and iron-sulfur (Fe-S) centers, to quinones in the respiratory chain. The immediate electron acceptor for the enzyme in this species is believed to be ubiquinone. Couples the redox reaction to proton translocation (for every two electrons transferred, four hydrogen ions are translocated across the cytoplasmic membrane), and thus conserves the redox energy in a proton gradient. This subunit may bind ubiquinone. This Burkholderia cenocepacia (strain ATCC BAA-245 / DSM 16553 / LMG 16656 / NCTC 13227 / J2315 / CF5610) (Burkholderia cepacia (strain J2315)) protein is NADH-quinone oxidoreductase subunit H.